A 394-amino-acid chain; its full sequence is Protein TsgA homolog (394 aa).

Transmembrane regions (helical) follow at residues 11-31 (WISFFSYALTGALVIVTGMVM), 51-71 (FLNTGILVSIFLNAWLMEIIP), 76-96 (LVFGFILMILAIAGLMVGHNL), 101-121 (ACMFVLGVVSGITMSIGTFLI), 134-154 (LLFTDSFFSMAGMVFPIIAAT), 160-180 (VAWYWVYACIGVLYLAIFILT), 206-226 (IGVLFLSIAALCYILGQLGFI), 246-266 (GLVSNFWTAYMVGMWFFSVAL), 274-294 (IVTVLAALSTFMMYMFVSSQQ), 297-317 (MLSMYILGLGFVSSAIYTTLI), 334-354 (FILTCGTIGTMLTFVVTGPIV), and 363-383 (LATANGLYLVVFVMCVLLGFV).

It belongs to the major facilitator superfamily. TsgA family.

The protein localises to the cell inner membrane. This Edwardsiella ictaluri (strain 93-146) protein is Protein TsgA homolog.